The chain runs to 634 residues: tRNA uridine 5-carboxymethylaminomethyl modification enzyme MnmG (634 aa).

14–19 lines the FAD pocket; sequence GGGHAG. 279 to 293 is an NAD(+) binding site; it reads GPRYCPSIEDKVVRF.

It belongs to the MnmG family. In terms of assembly, homodimer. Heterotetramer of two MnmE and two MnmG subunits. The cofactor is FAD.

Its subcellular location is the cytoplasm. In terms of biological role, NAD-binding protein involved in the addition of a carboxymethylaminomethyl (cmnm) group at the wobble position (U34) of certain tRNAs, forming tRNA-cmnm(5)s(2)U34. The sequence is that of tRNA uridine 5-carboxymethylaminomethyl modification enzyme MnmG from Xanthomonas axonopodis pv. citri (strain 306).